We begin with the raw amino-acid sequence, 542 residues long: CTP synthase (542 aa).

The tract at residues 1-265 (MTRYVFITGG…DREILAHFQM (265 aa)) is amidoligase domain. Residue serine 13 coordinates CTP. UTP is bound at residue serine 13. ATP contacts are provided by residues 14 to 19 (SLGKGL) and aspartate 71. Aspartate 71 and glutamate 139 together coordinate Mg(2+). CTP is bound by residues 146-148 (DIE), 186-191 (KTKPTQ), and lysine 222. UTP contacts are provided by residues 186 to 191 (KTKPTQ) and lysine 222. Position 238-240 (238-240 (RDV)) interacts with ATP. Residues 291–541 (TIAIVGKYTG…IAAAIEQSRL (251 aa)) enclose the Glutamine amidotransferase type-1 domain. Glycine 353 contacts L-glutamine. Cysteine 380 acts as the Nucleophile; for glutamine hydrolysis in catalysis. L-glutamine-binding positions include 381–384 (FGMQ), glutamate 404, and arginine 469. Catalysis depends on residues histidine 514 and glutamate 516.

The protein belongs to the CTP synthase family. As to quaternary structure, homotetramer.

The enzyme catalyses UTP + L-glutamine + ATP + H2O = CTP + L-glutamate + ADP + phosphate + 2 H(+). The catalysed reaction is L-glutamine + H2O = L-glutamate + NH4(+). It catalyses the reaction UTP + NH4(+) + ATP = CTP + ADP + phosphate + 2 H(+). Its pathway is pyrimidine metabolism; CTP biosynthesis via de novo pathway; CTP from UDP: step 2/2. With respect to regulation, allosterically activated by GTP, when glutamine is the substrate; GTP has no effect on the reaction when ammonia is the substrate. The allosteric effector GTP functions by stabilizing the protein conformation that binds the tetrahedral intermediate(s) formed during glutamine hydrolysis. Inhibited by the product CTP, via allosteric rather than competitive inhibition. Functionally, catalyzes the ATP-dependent amination of UTP to CTP with either L-glutamine or ammonia as the source of nitrogen. Regulates intracellular CTP levels through interactions with the four ribonucleotide triphosphates. This chain is CTP synthase, found in Methylorubrum populi (strain ATCC BAA-705 / NCIMB 13946 / BJ001) (Methylobacterium populi).